A 208-amino-acid chain; its full sequence is Uridine kinase (208 aa).

An ATP-binding site is contributed by 12–19; the sequence is GGSGGGKT.

The protein belongs to the uridine kinase family.

The protein resides in the cytoplasm. The catalysed reaction is uridine + ATP = UMP + ADP + H(+). It catalyses the reaction cytidine + ATP = CMP + ADP + H(+). The protein operates within pyrimidine metabolism; CTP biosynthesis via salvage pathway; CTP from cytidine: step 1/3. It functions in the pathway pyrimidine metabolism; UMP biosynthesis via salvage pathway; UMP from uridine: step 1/1. The sequence is that of Uridine kinase from Streptococcus pyogenes serotype M18 (strain MGAS8232).